The sequence spans 237 residues: Uridylate kinase (237 aa).

An ATP-binding site is contributed by 12–15; the sequence is KLSG. The involved in allosteric activation by GTP stretch occupies residues 20–25; the sequence is GDEGFG. Residue G54 participates in UMP binding. ATP contacts are provided by G55 and R59. Residues D74 and 135–142 each bind UMP; that span reads TGSPFFTT. ATP-binding residues include T162, Y168, and D171.

The protein belongs to the UMP kinase family. Homohexamer.

It is found in the cytoplasm. The enzyme catalyses UMP + ATP = UDP + ADP. It functions in the pathway pyrimidine metabolism; CTP biosynthesis via de novo pathway; UDP from UMP (UMPK route): step 1/1. With respect to regulation, allosterically activated by GTP. Inhibited by UTP. Catalyzes the reversible phosphorylation of UMP to UDP. In Haemophilus ducreyi (strain 35000HP / ATCC 700724), this protein is Uridylate kinase.